Reading from the N-terminus, the 412-residue chain is Tyrosine--tRNA ligase (412 aa).

Residue Tyr-31 participates in L-tyrosine binding. A 'HIGH' region motif is present at residues 36 to 45 (PTAPSLHIGH). Residues Tyr-162 and Gln-166 each contribute to the L-tyrosine site. The short motif at 222-226 (KIGKT) is the 'KMSKS' region element. Lys-225 is an ATP binding site. Positions 345–411 (KRWLDIVVEL…GKRKKQVIDL (67 aa)) constitute an S4 RNA-binding domain.

This sequence belongs to the class-I aminoacyl-tRNA synthetase family. TyrS type 1 subfamily. In terms of assembly, homodimer.

It is found in the cytoplasm. The catalysed reaction is tRNA(Tyr) + L-tyrosine + ATP = L-tyrosyl-tRNA(Tyr) + AMP + diphosphate + H(+). Functionally, catalyzes the attachment of tyrosine to tRNA(Tyr) in a two-step reaction: tyrosine is first activated by ATP to form Tyr-AMP and then transferred to the acceptor end of tRNA(Tyr). This is Tyrosine--tRNA ligase from Chlamydia trachomatis serovar A (strain ATCC VR-571B / DSM 19440 / HAR-13).